The chain runs to 396 residues: Endo-1,4-beta-xylanase A (396 aa).

Residues 1–28 (MITLFRKPFVAGLAISLLVGGGIGNVAA) form the signal peptide. Residues 51–396 (AWQVASLSER…VKPAYWRIID (346 aa)) form the GH10 domain. Glutamate 195 acts as the Proton donor in catalysis. The active-site Nucleophile is glutamate 301.

Belongs to the glycosyl hydrolase 10 (cellulase F) family.

The protein localises to the secreted. The enzyme catalyses Endohydrolysis of (1-&gt;4)-beta-D-xylosidic linkages in xylans.. The protein operates within glycan degradation; xylan degradation. The protein is Endo-1,4-beta-xylanase A (xynA) of Halalkalibacterium halodurans (strain ATCC BAA-125 / DSM 18197 / FERM 7344 / JCM 9153 / C-125) (Bacillus halodurans).